A 209-amino-acid polypeptide reads, in one-letter code: Large ribosomal subunit protein uL3 (209 aa).

The interval 144–165 is disordered; sequence GSMGAASDPSRTFKNKKMPGHM.

It belongs to the universal ribosomal protein uL3 family. As to quaternary structure, part of the 50S ribosomal subunit. Forms a cluster with proteins L14 and L19.

Its function is as follows. One of the primary rRNA binding proteins, it binds directly near the 3'-end of the 23S rRNA, where it nucleates assembly of the 50S subunit. In Clostridium novyi (strain NT), this protein is Large ribosomal subunit protein uL3.